Consider the following 116-residue polypeptide: Large ribosomal subunit protein bL17 (116 aa).

Belongs to the bacterial ribosomal protein bL17 family. Part of the 50S ribosomal subunit. Contacts protein L32.

In Synechococcus sp. (strain JA-3-3Ab) (Cyanobacteria bacterium Yellowstone A-Prime), this protein is Large ribosomal subunit protein bL17.